The chain runs to 960 residues: Phosphoenolpyruvate carboxylase 2 (960 aa).

Residues His-167 and Lys-595 contribute to the active site.

Belongs to the PEPCase type 1 family. In terms of assembly, homotetramer. Mg(2+) is required as a cofactor.

It is found in the cytoplasm. The enzyme catalyses oxaloacetate + phosphate = phosphoenolpyruvate + hydrogencarbonate. Its pathway is photosynthesis; C3 acid pathway. Through the carboxylation of phosphoenolpyruvate (PEP) it forms oxaloacetate, a four-carbon dicarboxylic acid source for the tricarboxylic acid cycle. This Sorghum bicolor (Sorghum) protein is Phosphoenolpyruvate carboxylase 2.